A 279-amino-acid chain; its full sequence is Dehydrogenase/reductase SDR family member 4 (279 aa).

Residue 37–61 participates in NADP(+) binding; the sequence is LVTASTDGIGFAIARRLAEDGAHVV. Residue Lys93 is modified to N6-acetyllysine; alternate. An N6-succinyllysine; alternate modification is found at Lys93. Lys106 bears the N6-acetyllysine mark. Ser170 contributes to the substrate binding site. Tyr183 serves as the catalytic Proton acceptor. Lys187 lines the NADP(+) pocket. Lys217 carries the N6-acetyllysine; alternate modification. Lys217 is modified (N6-succinyllysine; alternate). At Ser221 the chain carries Phosphoserine. N6-succinyllysine occurs at positions 228 and 235. The Peroxisomal targeting signal signature appears at 277–279; it reads SRL.

This sequence belongs to the short-chain dehydrogenases/reductases (SDR) family. In terms of assembly, homotetramer.

It is found in the peroxisome. The catalysed reaction is a secondary alcohol + NADP(+) = a ketone + NADPH + H(+). It catalyses the reaction 3alpha-hydroxy-5beta-pregnan-20-one + NADP(+) = 5beta-pregnan-3,20-dione + NADPH + H(+). The enzyme catalyses 5beta-dihydrotestosterone + NADPH + H(+) = 5beta-androstane-3alpha,17beta-diol + NADP(+). It carries out the reaction all-trans-retinol + NADP(+) = all-trans-retinal + NADPH + H(+). The catalysed reaction is isatin + NADPH + H(+) = 3-hydroxyindolin-2-one + NADP(+). NADPH-dependent oxidoreductase which catalyzes the reduction of a variety of compounds bearing carbonyl groups including ketosteroids, alpha-dicarbonyl compounds, aldehydes, aromatic ketones and quinones. Reduces all-trans-retinal and 9-cis retinal. Reduces 3-ketosteroids and benzil into 3alpha-hydroxysteroids and S-benzoin, respectively, in contrast to the stereoselectivity of primates DHRS4s which produce 3beta-hydroxysteroids and R-benzoin. In the reverse reaction, catalyzes the NADP-dependent oxidation of 3alpha-hydroxysteroids and alcohol, but with much lower efficiency. Involved in the metabolism of 3alpha-hydroxysteroids, retinoid, isatin and xenobiotic carbonyl compounds. The sequence is that of Dehydrogenase/reductase SDR family member 4 from Mus musculus (Mouse).